A 362-amino-acid polypeptide reads, in one-letter code: Thiol protease aleurain (362 aa).

The N-terminal stretch at 1-22 is a signal peptide; that stretch reads MAHARVLLLALAVLATAAVAVA. Positions 23-143 are cleaved as a propeptide — activation peptide; the sequence is SSSSFADSNP…GNHLMRDAAA (121 aa). 2 disulfides stabilise this stretch: cysteine 165-cysteine 208 and cysteine 199-cysteine 241. Cysteine 168 is a catalytic residue. The N-linked (GlcNAc...) asparagine glycan is linked to asparagine 188. Residue asparagine 257 is glycosylated (N-linked (GlcNAc...) asparagine). A disulfide bond links cysteine 299 and cysteine 349. Catalysis depends on residues histidine 308 and asparagine 328.

The protein belongs to the peptidase C1 family.

Its subcellular location is the vacuole. It catalyses the reaction Hydrolysis of proteins, acting as an aminopeptidase (notably, cleaving Arg-|-Xaa bonds) as well as an endopeptidase.. Functionally, may play a role in proteolysis leading to mobilization of nitrogen during senescence and starvation. The protein is Thiol protease aleurain of Hordeum vulgare (Barley).